Consider the following 198-residue polypeptide: ATP-dependent Clp protease proteolytic subunit 2 (198 aa).

Residue Ser101 is the Nucleophile of the active site. Residue His126 is part of the active site.

This sequence belongs to the peptidase S14 family. As to quaternary structure, fourteen ClpP subunits assemble into 2 heptameric rings which stack back to back to give a disk-like structure with a central cavity, resembling the structure of eukaryotic proteasomes.

The protein localises to the cytoplasm. The enzyme catalyses Hydrolysis of proteins to small peptides in the presence of ATP and magnesium. alpha-casein is the usual test substrate. In the absence of ATP, only oligopeptides shorter than five residues are hydrolyzed (such as succinyl-Leu-Tyr-|-NHMec, and Leu-Tyr-Leu-|-Tyr-Trp, in which cleavage of the -Tyr-|-Leu- and -Tyr-|-Trp bonds also occurs).. Functionally, cleaves peptides in various proteins in a process that requires ATP hydrolysis. Has a chymotrypsin-like activity. Plays a major role in the degradation of misfolded proteins. The chain is ATP-dependent Clp protease proteolytic subunit 2 from Thermosynechococcus vestitus (strain NIES-2133 / IAM M-273 / BP-1).